A 188-amino-acid chain; its full sequence is Ribosome-recycling factor (188 aa).

The protein belongs to the RRF family.

The protein resides in the cytoplasm. Its function is as follows. Responsible for the release of ribosomes from messenger RNA at the termination of protein biosynthesis. May increase the efficiency of translation by recycling ribosomes from one round of translation to another. This chain is Ribosome-recycling factor, found in Dinoroseobacter shibae (strain DSM 16493 / NCIMB 14021 / DFL 12).